We begin with the raw amino-acid sequence, 551 residues long: Glucans biosynthesis protein D (551 aa).

Positions 1–32 (MNRRRFLQGSLAMAALSGTTGLSTLFSRAAFA) form a signal peptide, tat-type signal.

This sequence belongs to the OpgD/OpgG family. Post-translationally, predicted to be exported by the Tat system. The position of the signal peptide cleavage has not been experimentally proven.

Its subcellular location is the periplasm. The protein operates within glycan metabolism; osmoregulated periplasmic glucan (OPG) biosynthesis. Its function is as follows. Probably involved in the control of the structural glucose backbone of osmoregulated periplasmic glucans (OPGs). This is Glucans biosynthesis protein D from Enterobacter sp. (strain 638).